The primary structure comprises 205 residues: UPF0056 membrane protein MJ1677 (205 aa).

A run of 6 helical transmembrane segments spans residues 7-27 (ILAF…PVFI), 49-69 (ALAI…FFGI), 70-90 (SLDA…LDMV), 112-132 (IALM…TACM), 145-165 (FLVI…LLSA), and 185-205 (GLIL…GALL).

The protein belongs to the UPF0056 (MarC) family.

The protein resides in the cell membrane. In Methanocaldococcus jannaschii (strain ATCC 43067 / DSM 2661 / JAL-1 / JCM 10045 / NBRC 100440) (Methanococcus jannaschii), this protein is UPF0056 membrane protein MJ1677.